The sequence spans 196 residues: uncharacterized protein (196 aa).

Residues 71–87 (YVKLIGTGCYVAILISG) form a helical membrane-spanning segment.

The protein resides in the membrane. This is an uncharacterized protein from Dictyostelium discoideum (Social amoeba).